A 186-amino-acid chain; its full sequence is Imidazoleglycerol-phosphate dehydratase (186 aa).

Belongs to the imidazoleglycerol-phosphate dehydratase family.

The protein resides in the cytoplasm. It carries out the reaction D-erythro-1-(imidazol-4-yl)glycerol 3-phosphate = 3-(imidazol-4-yl)-2-oxopropyl phosphate + H2O. The protein operates within amino-acid biosynthesis; L-histidine biosynthesis; L-histidine from 5-phospho-alpha-D-ribose 1-diphosphate: step 6/9. The protein is Imidazoleglycerol-phosphate dehydratase of Dictyoglomus thermophilum (strain ATCC 35947 / DSM 3960 / H-6-12).